We begin with the raw amino-acid sequence, 222 residues long: Sororin-like protein (222 aa).

The tract at residues 1–189 is disordered; that stretch reads MEAPRSVGGR…VKQEKEDPVS (189 aa). Over residues 24–33 the composition is skewed to low complexity; it reads SRSSQQSSSS. Over residues 47–60 the composition is skewed to basic and acidic residues; sequence RLVEQTTLKEKPKD. Residues 88 to 105 are compositionally biased toward low complexity; that stretch reads ADLASPASAPSRPQTSRS. Positions 155-162 match the Nuclear localization signal motif; that stretch reads GKKTRQAS. A compositionally biased stretch (basic residues) spans 167-179; that stretch reads KTLKVAPKKRQRT. Residues 192 to 214 form a C-terminal Sororin domain region; that stretch reads CQDYIEKQKAYFAEIDAFELPVE.

This sequence belongs to the sororin family.

It is found in the nucleus. Its function is as follows. Regulator of sister chromatid cohesion in mitosis stabilizing cohesin complex association with chromatin. Antagonizes the action of WAPL proteins (WAPL1 and WAPL2) which stimulates cohesin dissociation from chromatin, particularly during somatic division in root cells and meiocytes during anaphase I. Required for centromeric sister chromatid cohesion during male meiosis (microsporogenesis). Cohesion ensures that chromosome partitioning is accurate in dividing cells and may play an important role in DNA repair. The sequence is that of Sororin-like protein from Arabidopsis thaliana (Mouse-ear cress).